Consider the following 156-residue polypeptide: Endoribonuclease YbeY (156 aa).

Positions 122, 126, and 132 each coordinate Zn(2+).

The protein belongs to the endoribonuclease YbeY family. Requires Zn(2+) as cofactor.

Its subcellular location is the cytoplasm. Its function is as follows. Single strand-specific metallo-endoribonuclease involved in late-stage 70S ribosome quality control and in maturation of the 3' terminus of the 16S rRNA. The protein is Endoribonuclease YbeY of Moorella thermoacetica (strain ATCC 39073 / JCM 9320).